An 82-amino-acid polypeptide reads, in one-letter code: Small ribosomal subunit protein uS17 (82 aa).

Belongs to the universal ribosomal protein uS17 family. Part of the 30S ribosomal subunit.

Functionally, one of the primary rRNA binding proteins, it binds specifically to the 5'-end of 16S ribosomal RNA. The polypeptide is Small ribosomal subunit protein uS17 (Thermosynechococcus vestitus (strain NIES-2133 / IAM M-273 / BP-1)).